A 373-amino-acid chain; its full sequence is Protein U3 (373 aa).

This sequence belongs to the herpesviridae US22 family.

This Human herpesvirus 6A (strain Uganda-1102) (HHV-6 variant A) protein is Protein U3 (U3).